A 410-amino-acid polypeptide reads, in one-letter code: Shaggy-related protein kinase epsilon (410 aa).

Alanine 2 is modified (N-acetylalanine). The Protein kinase domain maps to 74–358; it reads YMAERIVGQG…AMEAIVHPFF (285 aa). Residues 80–88 and lysine 103 each bind ATP; that span reads VGQGSFGIV. Aspartate 199 acts as the Proton acceptor in catalysis. The residue at position 234 (tyrosine 234) is a Phosphotyrosine.

Belongs to the protein kinase superfamily. CMGC Ser/Thr protein kinase family. GSK-3 subfamily. As to quaternary structure, binds to KIB1. Autophosphorylated mainly on threonine and serine residues.

It carries out the reaction L-seryl-[protein] + ATP = O-phospho-L-seryl-[protein] + ADP + H(+). It catalyses the reaction L-threonyl-[protein] + ATP = O-phospho-L-threonyl-[protein] + ADP + H(+). Its function is as follows. May mediate extracellular signals to regulate transcription in differentiating cells. The polypeptide is Shaggy-related protein kinase epsilon (ASK5) (Arabidopsis thaliana (Mouse-ear cress)).